The chain runs to 166 residues: Bacterial non-heme ferritin (166 aa).

The 144-residue stretch at 2-145 folds into the Ferritin-like diiron domain; that stretch reads LSKELLAALN…THIDYLTRIG (144 aa). Fe cation-binding residues include glutamate 17, glutamate 50, histidine 53, glutamate 94, and glutamine 127.

Belongs to the ferritin family. Prokaryotic subfamily.

The protein resides in the cytoplasm. It catalyses the reaction 4 Fe(2+) + O2 + 6 H2O = 4 iron(III) oxide-hydroxide + 12 H(+). Its function is as follows. Iron-storage protein. This Staphylococcus epidermidis (strain ATCC 12228 / FDA PCI 1200) protein is Bacterial non-heme ferritin (ftnA).